Here is a 378-residue protein sequence, read N- to C-terminus: Succinyl-diaminopimelate desuccinylase (378 aa).

A Zn(2+)-binding site is contributed by His68. Asp70 is an active-site residue. A Zn(2+)-binding site is contributed by Asp101. Catalysis depends on Glu135, which acts as the Proton acceptor. Residues Glu136, Glu164, and His350 each coordinate Zn(2+).

The protein belongs to the peptidase M20A family. DapE subfamily. Homodimer. It depends on Zn(2+) as a cofactor. The cofactor is Co(2+).

The enzyme catalyses N-succinyl-(2S,6S)-2,6-diaminopimelate + H2O = (2S,6S)-2,6-diaminopimelate + succinate. It participates in amino-acid biosynthesis; L-lysine biosynthesis via DAP pathway; LL-2,6-diaminopimelate from (S)-tetrahydrodipicolinate (succinylase route): step 3/3. Its function is as follows. Catalyzes the hydrolysis of N-succinyl-L,L-diaminopimelic acid (SDAP), forming succinate and LL-2,6-diaminopimelate (DAP), an intermediate involved in the bacterial biosynthesis of lysine and meso-diaminopimelic acid, an essential component of bacterial cell walls. The polypeptide is Succinyl-diaminopimelate desuccinylase (Vibrio atlanticus (strain LGP32) (Vibrio splendidus (strain Mel32))).